The primary structure comprises 189 residues: ATP synthase subunit b (189 aa).

The helical transmembrane segment at 7–27 (LLIAALAVAPLAHAAEGGFVG) threads the bilayer.

Belongs to the ATPase B chain family. F-type ATPases have 2 components, F(1) - the catalytic core - and F(0) - the membrane proton channel. F(1) has five subunits: alpha(3), beta(3), gamma(1), delta(1), epsilon(1). F(0) has three main subunits: a(1), b(2) and c(10-14). The alpha and beta chains form an alternating ring which encloses part of the gamma chain. F(1) is attached to F(0) by a central stalk formed by the gamma and epsilon chains, while a peripheral stalk is formed by the delta and b chains.

It localises to the cell inner membrane. Functionally, f(1)F(0) ATP synthase produces ATP from ADP in the presence of a proton or sodium gradient. F-type ATPases consist of two structural domains, F(1) containing the extramembraneous catalytic core and F(0) containing the membrane proton channel, linked together by a central stalk and a peripheral stalk. During catalysis, ATP synthesis in the catalytic domain of F(1) is coupled via a rotary mechanism of the central stalk subunits to proton translocation. Component of the F(0) channel, it forms part of the peripheral stalk, linking F(1) to F(0). This Hyphomonas neptunium (strain ATCC 15444) protein is ATP synthase subunit b.